The following is a 163-amino-acid chain: Nucleotide-binding protein CKO_02735 (163 aa).

The protein belongs to the YajQ family.

Functionally, nucleotide-binding protein. This Citrobacter koseri (strain ATCC BAA-895 / CDC 4225-83 / SGSC4696) protein is Nucleotide-binding protein CKO_02735.